Here is a 288-residue protein sequence, read N- to C-terminus: Sulfur carrier protein FdhD (288 aa).

Cys122 acts as the Cysteine persulfide intermediate in catalysis. 268–273 is a binding site for Mo-bis(molybdopterin guanine dinucleotide); that stretch reads FVRGER.

It belongs to the FdhD family.

The protein localises to the cytoplasm. In terms of biological role, required for formate dehydrogenase (FDH) activity. Acts as a sulfur carrier protein that transfers sulfur from IscS to the molybdenum cofactor prior to its insertion into FDH. This is Sulfur carrier protein FdhD from Anaeromyxobacter sp. (strain K).